We begin with the raw amino-acid sequence, 68 residues long: Toxin Cg2 (68 aa).

In terms of domain architecture, LCN-type CS-alpha/beta spans 1-66; the sequence is KDGYLVNKST…VYPIPGKTCS (66 aa). 4 cysteine pairs are disulfide-bonded: Cys-12/Cys-65, Cys-16/Cys-41, Cys-25/Cys-46, and Cys-29/Cys-48.

This sequence belongs to the long (4 C-C) scorpion toxin superfamily. Sodium channel inhibitor family. Expressed by the venom gland.

The protein resides in the secreted. In terms of biological role, binds to sodium channels (Nav) and inhibits them. The polypeptide is Toxin Cg2 (Centruroides gracilis (Slenderbrown scorpion)).